The sequence spans 247 residues: MLDATIDADVFRESVDAIAALVTECRLHATEQGLRTRTVDTANVAMISLELDKDVFESYQATSSEMGIDIVKIKNVLSMMGKGDPVHLALAEESRKLEVSFQSYQYSITLLDTNTIRKDPNAPTIELPGKVVISGAALSAAIKAASVVSDKIALGIDPEKGIFYMEAEGDTDHIRLELGDDKLISLVPVQARSLFSLDYLKDMGKTMSKAEKVEISLGIDHPVEFTFDIADGKGHVMYLLAPRIEAD.

Belongs to the PCNA family. In terms of assembly, homotrimer. The subunits circularize to form a toroid; DNA passes through its center. Replication factor C (RFC) is required to load the toroid on the DNA.

Functionally, sliding clamp subunit that acts as a moving platform for DNA processing. Responsible for tethering the catalytic subunit of DNA polymerase and other proteins to DNA during high-speed replication. The chain is DNA polymerase sliding clamp from Methanosphaerula palustris (strain ATCC BAA-1556 / DSM 19958 / E1-9c).